A 149-amino-acid polypeptide reads, in one-letter code: Calmodulin (149 aa).

EF-hand domains lie at 8-43 (EQIA…LGQN), 44-79 (PTEA…KMKD), 81-116 (DSEE…LGEK), and 117-149 (LTDE…MMSK). Residues aspartate 21, aspartate 23, aspartate 25, threonine 27, glutamate 32, aspartate 57, aspartate 59, asparagine 61, threonine 63, glutamate 68, aspartate 94, aspartate 96, asparagine 98, glutamate 105, aspartate 130, aspartate 132, aspartate 134, glutamine 136, and glutamate 141 each contribute to the Ca(2+) site.

This sequence belongs to the calmodulin family.

Functionally, calmodulin mediates the control of a large number of enzymes, ion channels and other proteins by Ca(2+). Among the enzymes to be stimulated by the calmodulin-Ca(2+) complex are a number of protein kinases and phosphatases. The polypeptide is Calmodulin (Globisporangium splendens (Leaf rot fungus)).